Consider the following 100-residue polypeptide: Urease subunit gamma (100 aa).

It belongs to the urease gamma subunit family. As to quaternary structure, heterotrimer of UreA (gamma), UreB (beta) and UreC (alpha) subunits. Three heterotrimers associate to form the active enzyme.

The protein resides in the cytoplasm. The catalysed reaction is urea + 2 H2O + H(+) = hydrogencarbonate + 2 NH4(+). It functions in the pathway nitrogen metabolism; urea degradation; CO(2) and NH(3) from urea (urease route): step 1/1. The polypeptide is Urease subunit gamma (Streptomyces griseus subsp. griseus (strain JCM 4626 / CBS 651.72 / NBRC 13350 / KCC S-0626 / ISP 5235)).